The chain runs to 522 residues: Solute carrier family 2, facilitated glucose transporter member 2 (522 aa).

Over 1 to 10 (MSEDKITGTL) the chain is Cytoplasmic. Residues 11-31 (AFTVFTAVLGSFQFGYDIGVI) form a helical membrane-spanning segment. At 32-96 (NAPQEVIISH…SAHIVTMLWS (65 aa)) the chain is on the extracellular side. Residue N62 is glycosylated (N-linked (GlcNAc...) asparagine). The chain crosses the membrane as a helical span at residues 97 to 117 (LSVSSFAVGGMVASFFGGWLG). At 118–125 (DKLGRIKA) the chain is on the cytoplasmic side. The chain crosses the membrane as a helical span at residues 126-146 (MLAANSLSLTGALLMGCSKFG). The Extracellular segment spans residues 147–156 (PAHALIIAGR). A helical membrane pass occupies residues 157–177 (SVSGLYCGLISGLVPMYIGEI). Residues 178 to 185 (APTTLRGA) are Cytoplasmic-facing. Residues 186-206 (LGTLHQLALVTGILISQIAGL) traverse the membrane as a helical segment. Residue Q191 participates in D-glucose binding. Topologically, residues 207–215 (SFILGNQDY) are extracellular. Residues 216–236 (WHILLGLSAVPALLQCLLLLF) traverse the membrane as a helical segment. The Cytoplasmic portion of the chain corresponds to 237-301 (CPESPRYLYL…LFTDPNYRQP (65 aa)). A helical transmembrane segment spans residues 302-322 (IVVALMLHLAQQFSGINGIFY). D-glucose contacts are provided by residues 312 to 313 (QQ) and N318. The Extracellular segment spans residues 323-337 (YSTSIFQTAGISQPV). A helical membrane pass occupies residues 338–358 (YATIGVGAINMIFTAVSVLLV). N347 is a D-glucose binding site. Residues 359 to 365 (EKAGRRT) lie on the Cytoplasmic side of the membrane. Residues 366–386 (LFLAGMIGMFFCAVFMSLGLV) traverse the membrane as a helical segment. The Extracellular portion of the chain corresponds to 387 to 401 (LLDKFTWMSYVSMTA). A helical transmembrane segment spans residues 402-422 (IFLFVSFFEIGPGPIPWFMVA). D-glucose is bound by residues E410 and W418. At 423-431 (EFFSQGPRP) the chain is on the cytoplasmic side. Residues 432 to 452 (TALALAAFSNWVCNFIIALCF) traverse the membrane as a helical segment. The Extracellular segment spans residues 453 to 459 (QYIADFL). A helical transmembrane segment spans residues 460–480 (GPYVFFLFAGVVLVFTLFTFF). Residues 481 to 522 (KVPETKGKSFDEIAAEFRKKSGSAPPRKATVQMEFLGSSETV) lie on the Cytoplasmic side of the membrane. T521 carries the phosphothreonine modification.

It belongs to the major facilitator superfamily. Sugar transporter (TC 2.A.1.1) family. Glucose transporter subfamily. In terms of processing, N-glycosylated; required for stability and retention at the cell surface of pancreatic beta cells. In terms of tissue distribution, present in liver, intestine, kidney and beta-pancreatic islet cells.

The protein localises to the cell membrane. It carries out the reaction D-glucose(out) = D-glucose(in). The enzyme catalyses D-fructose(out) = D-fructose(in). The catalysed reaction is L-dehydroascorbate(out) = L-dehydroascorbate(in). It catalyses the reaction D-galactose(in) = D-galactose(out). With respect to regulation, D-glucose and maltose competitively inhibit fructose transport. D-glucose, D-fructose and maltose inhibit deoxyglucose transport. Functionally, facilitative hexose transporter that mediates the transport of glucose, fructose and galactose. Likely mediates the bidirectional transfer of glucose across the plasma membrane of hepatocytes and is responsible for uptake of glucose by the beta cells; may comprise part of the glucose-sensing mechanism of the beta cell. May also participate with the Na(+)/glucose cotransporter in the transcellular transport of glucose in the small intestine and kidney. Also able to mediate the transport of dehydroascorbate. This chain is Solute carrier family 2, facilitated glucose transporter member 2, found in Rattus norvegicus (Rat).